The primary structure comprises 267 residues: Transcription factor LBX1 (267 aa).

Residues 1–21 (MTSKDEAKSSASSVEERRRNA) show a composition bias toward basic and acidic residues. Positions 1–36 (MTSKDEAKSSASSVEERRRNALDLLPPPANSNKPLT) are disordered. The homeobox DNA-binding region spans 127–186 (RRKSRTAFTNHQIYELEKRFLYQKYLSPADRDQIAQQLGLTNAQVITWFQNRRAKLKRDL). The disordered stretch occupies residues 211–267 (SELEESGSERGNSRSRSPQLGLTSNHMPLSPSXPLTDQHASKECSEDEEDVEIDVDD). Positions 228–237 (PQLGLTSNHM) are enriched in polar residues. Acidic residues predominate over residues 255–267 (SEDEEDVEIDVDD).

In terms of tissue distribution, expressed in all myoblasts that will populate body wall muscles as well as in a group of cells the migrate into the head.

The protein resides in the nucleus. Functionally, transcription factor that controls hypaxial muscle development by down-regulating myod1 and cdkn1b/p27, thereby allowing myoblasts to proliferate before the onset of terminal differentiation. This is Transcription factor LBX1 from Xenopus laevis (African clawed frog).